A 46-amino-acid chain; its full sequence is MSTLPILLATLPEAYLPFRPLVDVLPSIPVLFLLLAFVWQAAVSFR.

Positions 1 to 9 (MSTLPILLA) are excised as a propeptide. The chain crosses the membrane as a helical span at residues 25-45 (LPSIPVLFLLLAFVWQAAVSF).

This sequence belongs to the PsbK family. PSII is composed of 1 copy each of membrane proteins PsbA, PsbB, PsbC, PsbD, PsbE, PsbF, PsbH, PsbI, PsbJ, PsbK, PsbL, PsbM, PsbT, PsbX, PsbY, PsbZ, Psb30/Ycf12, at least 3 peripheral proteins of the oxygen-evolving complex and a large number of cofactors. It forms dimeric complexes.

It localises to the plastid. The protein resides in the chloroplast thylakoid membrane. Functionally, one of the components of the core complex of photosystem II (PSII). PSII is a light-driven water:plastoquinone oxidoreductase that uses light energy to abstract electrons from H(2)O, generating O(2) and a proton gradient subsequently used for ATP formation. It consists of a core antenna complex that captures photons, and an electron transfer chain that converts photonic excitation into a charge separation. The sequence is that of Photosystem II reaction center protein K from Nephroselmis olivacea (Green alga).